The following is a 274-amino-acid chain: MSDCLLPSSDMDAFRKILKKANSVVILTGAGVSAESGVPTFRGAGGLWRTYSAQNLATPSAFRSNPSLVWEFYHHRRENMASKSPNNAHNAIAEFEHRMTKEGRHVSVITQNIDELHQRAGSVNVLELHGSLFKTRCLKCKKIEPNHDSPICEALRGKGSPSPNEVGELVPESLLPRCKVSSCGGLLRPHVVWFHENLDSAVLKKADEELNSCDLCLVVGTSSVVYPAAMFAPQVAERGVPVAEFNMETTAATHHFGFHFSGPCGELLPKALAP.

The Deacetylase sirtuin-type domain maps to 4 to 274; sequence CLLPSSDMDA…GELLPKALAP (271 aa). NAD(+) is bound at residue 29 to 48; it reads GAGVSAESGVPTFRGAGGLW. Substrate is bound by residues Y73 and R76. NAD(+) is bound at residue 111 to 114; it reads QNID. Residue H129 is the Proton acceptor of the active site. Zn(2+) is bound by residues C137, C140, C178, and C183. NAD(+)-binding positions include 220-222, 246-248, and C264; these read GTS and NME.

The protein belongs to the sirtuin family. Class III subfamily. Zn(2+) serves as cofactor.

The protein localises to the mitochondrion. The enzyme catalyses N(6)-malonyl-L-lysyl-[protein] + NAD(+) + H2O = 2''-O-malonyl-ADP-D-ribose + nicotinamide + L-lysyl-[protein]. It catalyses the reaction N(6)-succinyl-L-lysyl-[protein] + NAD(+) + H2O = 2''-O-succinyl-ADP-D-ribose + nicotinamide + L-lysyl-[protein]. The catalysed reaction is N(6)-glutaryl-L-lysyl-[protein] + NAD(+) + H2O = 2''-O-glutaryl-ADP-D-ribose + nicotinamide + L-lysyl-[protein]. Functionally, NAD-dependent lysine demalonylase, desuccinylase and deglutarylase that specifically removes malonyl, succinyl and glutaryl groups on target proteins. Has weak NAD-dependent protein deacetylase activity; however this activity may not be physiologically relevant in vivo. The chain is NAD-dependent protein deacylase from Daphnia pulex (Water flea).